We begin with the raw amino-acid sequence, 643 residues long: Very long-chain fatty acid transport protein (643 aa).

At 1-15 (MACMHQAQLYNDLEE) the chain is on the cytoplasmic side. The chain crosses the membrane as a helical span at residues 16-36 (LLTGPSVPIVAGAAGAAALTA). Residues 37-138 (YINAKYHIAH…AIDGGNSAEH (102 aa)) lie on the Extracellular side of the membrane. The helical transmembrane segment at 139–159 (LMLWLALDAIGAATSFLNWNL) threads the bilayer. Topologically, residues 160–249 (TGAGLIHCIK…TGLPKGVFIS (90 aa)) are cytoplasmic. 235–246 (YTSGTTGLPKGV) serves as a coordination point for ATP. Residues 250–318 (TGRELRTDWS…FWPEVVASEA (69 aa)) lie within the membrane without spanning it. Residues 319–643 (NIIQYVGELG…QGIVDKRIRL (325 aa)) are Cytoplasmic-facing. The short motif at 477 to 525 (DLWFKSGDMLRQDAEGRVYFVDRLGDTFRWKSENVSTNEVADVMGTFPQ) is the FACS element.

The protein belongs to the ATP-dependent AMP-binding enzyme family.

The protein resides in the lipid droplet. The protein localises to the cell membrane. It localises to the peroxisome membrane. It is found in the peroxisome. The catalysed reaction is a very long-chain fatty acid + ATP + CoA = a very long-chain fatty acyl-CoA + AMP + diphosphate. Acyl-CoA synthetase required for both the import of long chain fatty acids (LCFAs) (C14-C18) and the activation very long chain fatty acids (VLCFAs) (C20-C26) by esterification of the fatty acids into metabolically active CoA-thioesters for subsequent degradation or incorporation into phospholipids. The transport and fatty acyl-CoA synthetase activities are genetically separable and are thus independent activities. Esterifies VLCFAs in the peroxisome matrix. The VLCFAs are actively transported into peroxisomes by a PXA1-PXA2 heterodimeric transporter in the peroxisomal membrane. The protein is Very long-chain fatty acid transport protein (FAT1) of Cochliobolus heterostrophus (Southern corn leaf blight fungus).